Reading from the N-terminus, the 323-residue chain is MSTLPTQIAPNSSTSMAPTFLLVGMPGLSGAPSWWTLPLIAVYLLSALGNGTILWIIALQPALHRPMHFFLFLLSVSDIGLVTALMPTLLGIALAGAHTVPASACLLQMVFIHVFSVMESSVLLAMSIDRALAICRPLHYPALLTNGVISKISLAISFRCLGLHLPLPFLLAYMPYCLPQVLTHSYCLHPDVARLACPEAWGAAYSLFVVLSAMGLDPLLIFFSYGLIGKVLQGVESREDRWKAGQTCAAHLSAVLLFYIPMILLALINHPELPITQHTHTLLSYVHFLLPPLINPILYSVKMKEIRKRILNRLQPRKVGGAQ.

Over 1 to 33 (MSTLPTQIAPNSSTSMAPTFLLVGMPGLSGAPS) the chain is Extracellular. The N-linked (GlcNAc...) asparagine glycan is linked to N11. A helical transmembrane segment spans residues 34 to 54 (WWTLPLIAVYLLSALGNGTIL). The Cytoplasmic segment spans residues 55 to 62 (WIIALQPA). A helical membrane pass occupies residues 63–83 (LHRPMHFFLFLLSVSDIGLVT). Topologically, residues 84–107 (ALMPTLLGIALAGAHTVPASACLL) are extracellular. A disulfide bridge links C105 with C197. Residues 108–128 (QMVFIHVFSVMESSVLLAMSI) traverse the membrane as a helical segment. The Cytoplasmic segment spans residues 129 to 147 (DRALAICRPLHYPALLTNG). Residues 148–168 (VISKISLAISFRCLGLHLPLP) form a helical membrane-spanning segment. Over 169–203 (FLLAYMPYCLPQVLTHSYCLHPDVARLACPEAWGA) the chain is Extracellular. Residues 204–224 (AYSLFVVLSAMGLDPLLIFFS) form a helical membrane-spanning segment. The Cytoplasmic portion of the chain corresponds to 225–244 (YGLIGKVLQGVESREDRWKA). Residues 245-265 (GQTCAAHLSAVLLFYIPMILL) form a helical membrane-spanning segment. Residues 266 to 280 (ALINHPELPITQHTH) are Extracellular-facing. Residues 281 to 301 (TLLSYVHFLLPPLINPILYSV) form a helical membrane-spanning segment. At 302 to 323 (KMKEIRKRILNRLQPRKVGGAQ) the chain is on the cytoplasmic side.

It belongs to the G-protein coupled receptor 1 family.

The protein localises to the cell membrane. Functionally, odorant receptor. This chain is Olfactory receptor 51S1 (OR51S1), found in Homo sapiens (Human).